The primary structure comprises 72 residues: UPF0154 protein LBA1278 (72 aa).

The chain crosses the membrane as a helical span at residues 3–23 (LGLAIFLIIIALLVGATAGFY).

It belongs to the UPF0154 family.

It is found in the cell membrane. The protein is UPF0154 protein LBA1278 of Lactobacillus acidophilus (strain ATCC 700396 / NCK56 / N2 / NCFM).